A 535-amino-acid polypeptide reads, in one-letter code: GMP synthase [glutamine-hydrolyzing] (535 aa).

In terms of domain architecture, Glutamine amidotransferase type-1 spans 24–217 (KILIVDFGSQ…VRKVAGLKGD (194 aa)). The active-site Nucleophile is C101. Catalysis depends on residues H191 and E193. Positions 218-410 (WTMRAFREEA…LGLPEVFVGR (193 aa)) constitute a GMPS ATP-PPase domain. 245–251 (SGGVDSA) is an ATP binding site.

Homodimer.

The catalysed reaction is XMP + L-glutamine + ATP + H2O = GMP + L-glutamate + AMP + diphosphate + 2 H(+). Its pathway is purine metabolism; GMP biosynthesis; GMP from XMP (L-Gln route): step 1/1. Catalyzes the synthesis of GMP from XMP. The chain is GMP synthase [glutamine-hydrolyzing] from Rhodopseudomonas palustris (strain BisB18).